A 1363-amino-acid polypeptide reads, in one-letter code: DNA-directed RNA polymerase subunit beta (1363 aa).

Belongs to the RNA polymerase beta chain family. The RNAP catalytic core consists of 2 alpha, 1 beta, 1 beta' and 1 omega subunit. When a sigma factor is associated with the core the holoenzyme is formed, which can initiate transcription.

It carries out the reaction RNA(n) + a ribonucleoside 5'-triphosphate = RNA(n+1) + diphosphate. Its function is as follows. DNA-dependent RNA polymerase catalyzes the transcription of DNA into RNA using the four ribonucleoside triphosphates as substrates. This chain is DNA-directed RNA polymerase subunit beta, found in Pelagibacter ubique (strain HTCC1062).